Here is a 313-residue protein sequence, read N- to C-terminus: Ornithine carbamoyltransferase (313 aa).

Residues 57–60, R108, and 135–138 contribute to the carbamoyl phosphate site; these read STRT and HPTQ. Residues N167, D231, and 235-236 each bind L-ornithine; that span reads SM. Residues 272–273 and R300 each bind carbamoyl phosphate; that span reads CL.

Belongs to the aspartate/ornithine carbamoyltransferase superfamily. OTCase family.

The protein localises to the cytoplasm. It catalyses the reaction carbamoyl phosphate + L-ornithine = L-citrulline + phosphate + H(+). The protein operates within amino-acid biosynthesis; L-arginine biosynthesis; L-arginine from L-ornithine and carbamoyl phosphate: step 1/3. In terms of biological role, reversibly catalyzes the transfer of the carbamoyl group from carbamoyl phosphate (CP) to the N(epsilon) atom of ornithine (ORN) to produce L-citrulline. This is Ornithine carbamoyltransferase from Thermotoga petrophila (strain ATCC BAA-488 / DSM 13995 / JCM 10881 / RKU-1).